We begin with the raw amino-acid sequence, 469 residues long: Neuraminidase (469 aa).

Residues 1–6 are Intravirion-facing; it reads MNPNQK. A helical transmembrane segment spans residues 7–27; the sequence is IITIGSICMVIGIVSLMLQIG. Residues 11 to 33 are involved in apical transport and lipid raft association; sequence GSICMVIGIVSLMLQIGNIISIW. Residues 28-469 lie on the Virion surface side of the membrane; that stretch reads NIISIWVSHS…GAELPFTIDK (442 aa). A hypervariable stalk region region spans residues 36–90; the sequence is HSIQTGNQHQAEPCNQSIITYENNTWVNQTYVNISNTNFLTEKAVASVTLAGNSS. N-linked (GlcNAc...) asparagine; by host glycans are attached at residues Asn-50, Asn-58, Asn-63, Asn-68, and Asn-88. The segment at 91–469 is head of neuraminidase; sequence LCPISGWAVY…GAELPFTIDK (379 aa). Cystine bridges form between Cys-92–Cys-417, Cys-124–Cys-129, Cys-184–Cys-231, Cys-233–Cys-238, Cys-279–Cys-292, Cys-281–Cys-290, Cys-318–Cys-335, and Cys-421–Cys-446. Arg-118 contributes to the substrate binding site. Residue Asn-146 is glycosylated (N-linked (GlcNAc...) asparagine; by host). Asp-151 functions as the Proton donor/acceptor in the catalytic mechanism. Arg-152 is a substrate binding site. An N-linked (GlcNAc...) asparagine; by host glycan is attached at Asn-235. 277–278 lines the substrate pocket; that stretch reads EE. Position 293 (Arg-293) interacts with substrate. Ca(2+) contacts are provided by Asp-294, Gly-298, and Asp-324. Arg-368 serves as a coordination point for substrate. An N-linked (GlcNAc...) asparagine; by host glycan is attached at Asn-386. Tyr-402 acts as the Nucleophile in catalysis.

The protein belongs to the glycosyl hydrolase 34 family. Homotetramer. Ca(2+) serves as cofactor. In terms of processing, N-glycosylated.

It is found in the virion membrane. Its subcellular location is the host apical cell membrane. It catalyses the reaction Hydrolysis of alpha-(2-&gt;3)-, alpha-(2-&gt;6)-, alpha-(2-&gt;8)- glycosidic linkages of terminal sialic acid residues in oligosaccharides, glycoproteins, glycolipids, colominic acid and synthetic substrates.. Its activity is regulated as follows. Inhibited by the neuraminidase inhibitors zanamivir (Relenza) and oseltamivir (Tamiflu). These drugs interfere with the release of progeny virus from infected cells and are effective against all influenza strains. Resistance to neuraminidase inhibitors is quite rare. Its function is as follows. Catalyzes the removal of terminal sialic acid residues from viral and cellular glycoconjugates. Cleaves off the terminal sialic acids on the glycosylated HA during virus budding to facilitate virus release. Additionally helps virus spread through the circulation by further removing sialic acids from the cell surface. These cleavages prevent self-aggregation and ensure the efficient spread of the progeny virus from cell to cell. Otherwise, infection would be limited to one round of replication. Described as a receptor-destroying enzyme because it cleaves a terminal sialic acid from the cellular receptors. May facilitate viral invasion of the upper airways by cleaving the sialic acid moieties on the mucin of the airway epithelial cells. Likely to plays a role in the budding process through its association with lipid rafts during intracellular transport. May additionally display a raft-association independent effect on budding. Plays a role in the determination of host range restriction on replication and virulence. Sialidase activity in late endosome/lysosome traffic seems to enhance virus replication. The polypeptide is Neuraminidase (Aves (Cat)).